The chain runs to 592 residues: MENSVSEASLYLQDQLDKLRTIIESMLGSSSTLLSMSITPHKSTACLVPGQIDPEATCPACSLDVSHQVSLLVQRYEQLQDMVSGLAASRPSKKAKLQGQDEELLGHVQSAILQVQGDCEKLNITTSNLIEDHRQKQKDIEVLYQGIERLDKEKANREHLEMEIDEKADKSALASKVSRIQFDATTEQLNHMMQELVAKMSGQEQDWQKLLDKLLAEMDSKLDRLELDPLKQMLEDRWKSLRQQLKERPPLYQADEAAAMRRQLLAHFHCLSCDRPLETTVTGQVISVTPIISSMPGHRSVRPYTVFELEQIRQQSRNLKLGSSFPRVDMSQMERSVGRLHSMHSRMLMDMEKVQVHFGGSVKASSQMIRELLHTQCLSHPCYKRGADTADYSYSTVSRRCGGSHTLTYPYRRNRPQHLSPLEEIQIAMKHDEVDILGLDGHIYKGRMDTRLPGILGKDAPGVTKHNKAKLQQLQQLQQLQQLQQLQQLQQAQHARPHAHRQPSLGNMISPPSRPQSAQMIADSKAVPSGQKKDRPVSSEGRLLQSNVSHSSIPTDIASLQGSQQGLNMHIDVPPGEGLEEPTRGPRSTAAH.

Positions 488 to 592 are disordered; the sequence is QLQQAQHARP…TRGPRSTAAH (105 aa). Positions 544 to 567 are enriched in polar residues; the sequence is LQSNVSHSSIPTDIASLQGSQQGL.

As to quaternary structure, interacts with AKAP3, ODF2 and TSSK4. Interacts with AKAP4. Expressed in testis. Not detected in heart, brain, kidney, stomach, ovary, liver, lung and uterus.

Its subcellular location is the nucleus membrane. It localises to the nucleus. The protein resides in the cytoplasm. It is found in the cell projection. The protein localises to the cilium. Its subcellular location is the flagellum. Its function is as follows. Has an essential role in the formation of sperm flagella and flagellar structure maintainance. It acts as a suppressor of ubiquitination and degradation of proteins involved in flagellar development and motility. The sequence is that of Glutamine-rich protein 2 from Mus musculus (Mouse).